We begin with the raw amino-acid sequence, 322 residues long: MSKAEIEKEPLNLSQLDLFEEIEKLKKELNAVVLAHYYQEPDIQDVADVLGDSLQLAREAQKTDAEVIVFAGVHFMAETAKILNPNKQVLLPDLEAGCSLADSCPPNLFRHFKAQHPDAIVISYINCSAEIKALSDIICTSSNAMHLVEQIPKEQKIIFAPDKNLGGYLMKKIGREMILWQGSCHVHEIFSEKKLIGLKVRYPGAEVLAHPECESVVLRHADFIGSTKAMLDYSVASDKKEFIVVTESGLIHEMQKRSPKKLFVPAPSTQETCACNECPHMRLNTLEKLYLCMKNRTPEITMSEDLRLAALKPIERMLELSK.

Iminosuccinate-binding residues include His-36 and Ser-53. A [4Fe-4S] cluster-binding site is contributed by Cys-98. Residues 124-126 (YIN) and Ser-141 each bind iminosuccinate. Cys-184 provides a ligand contact to [4Fe-4S] cluster. Iminosuccinate-binding positions include 210–212 (HPE) and Thr-227. A [4Fe-4S] cluster-binding site is contributed by Cys-278.

This sequence belongs to the quinolinate synthase family. Type 2 subfamily. The cofactor is [4Fe-4S] cluster.

The protein localises to the cytoplasm. The catalysed reaction is iminosuccinate + dihydroxyacetone phosphate = quinolinate + phosphate + 2 H2O + H(+). It participates in cofactor biosynthesis; NAD(+) biosynthesis; quinolinate from iminoaspartate: step 1/1. In terms of biological role, catalyzes the condensation of iminoaspartate with dihydroxyacetone phosphate to form quinolinate. The chain is Quinolinate synthase from Chloroherpeton thalassium (strain ATCC 35110 / GB-78).